The following is a 189-amino-acid chain: GTP cyclohydrolase 1 (189 aa).

Zn(2+) contacts are provided by Cys79, His82, and Cys150.

This sequence belongs to the GTP cyclohydrolase I family. Homomer.

It catalyses the reaction GTP + H2O = 7,8-dihydroneopterin 3'-triphosphate + formate + H(+). Its pathway is cofactor biosynthesis; 7,8-dihydroneopterin triphosphate biosynthesis; 7,8-dihydroneopterin triphosphate from GTP: step 1/1. The sequence is that of GTP cyclohydrolase 1 from Rickettsia rickettsii (strain Iowa).